The sequence spans 490 residues: Bifunctional protein GlmU (490 aa).

The segment at 1-241 (MSSPGDTAVL…SALVAGVNNR (241 aa)) is pyrophosphorylase. UDP-N-acetyl-alpha-D-glucosamine is bound by residues 12-15 (LAAG), lysine 26, glutamine 83, 88-89 (GT), 112-114 (SGD), glycine 151, glutamate 166, asparagine 181, and asparagine 239. Position 114 (aspartate 114) interacts with Mg(2+). Asparagine 239 contributes to the Mg(2+) binding site. The linker stretch occupies residues 242 to 262 (VQLAQLGAELNRRIVAAHQLA). The interval 263–490 (GVTVVDPATT…AGGRPAGEAE (228 aa)) is N-acetyltransferase. Arginine 344 and lysine 362 together coordinate UDP-N-acetyl-alpha-D-glucosamine. The active-site Proton acceptor is the histidine 374. Residues tyrosine 377 and asparagine 388 each contribute to the UDP-N-acetyl-alpha-D-glucosamine site. Residues alanine 391, 397–398 (NY), serine 416, and alanine 434 each bind acetyl-CoA. The interval 462–490 (RRKRPGSAAARAAEAAEKAAGGRPAGEAE) is disordered. Low complexity predominate over residues 467–490 (GSAAARAAEAAEKAAGGRPAGEAE).

This sequence in the N-terminal section; belongs to the N-acetylglucosamine-1-phosphate uridyltransferase family. The protein in the C-terminal section; belongs to the transferase hexapeptide repeat family. In terms of assembly, homotrimer. Mg(2+) is required as a cofactor.

Its subcellular location is the cytoplasm. It carries out the reaction alpha-D-glucosamine 1-phosphate + acetyl-CoA = N-acetyl-alpha-D-glucosamine 1-phosphate + CoA + H(+). The enzyme catalyses N-acetyl-alpha-D-glucosamine 1-phosphate + UTP + H(+) = UDP-N-acetyl-alpha-D-glucosamine + diphosphate. Its pathway is nucleotide-sugar biosynthesis; UDP-N-acetyl-alpha-D-glucosamine biosynthesis; N-acetyl-alpha-D-glucosamine 1-phosphate from alpha-D-glucosamine 6-phosphate (route II): step 2/2. The protein operates within nucleotide-sugar biosynthesis; UDP-N-acetyl-alpha-D-glucosamine biosynthesis; UDP-N-acetyl-alpha-D-glucosamine from N-acetyl-alpha-D-glucosamine 1-phosphate: step 1/1. It participates in bacterial outer membrane biogenesis; LPS lipid A biosynthesis. Its function is as follows. Catalyzes the last two sequential reactions in the de novo biosynthetic pathway for UDP-N-acetylglucosamine (UDP-GlcNAc). The C-terminal domain catalyzes the transfer of acetyl group from acetyl coenzyme A to glucosamine-1-phosphate (GlcN-1-P) to produce N-acetylglucosamine-1-phosphate (GlcNAc-1-P), which is converted into UDP-GlcNAc by the transfer of uridine 5-monophosphate (from uridine 5-triphosphate), a reaction catalyzed by the N-terminal domain. The chain is Bifunctional protein GlmU from Mycolicibacterium paratuberculosis (strain ATCC BAA-968 / K-10) (Mycobacterium paratuberculosis).